The primary structure comprises 355 residues: MSIVLAIETSCDETAVAIVNNRKVLGNVVASQIDIHREFGGVVPEVASRHHLESINACIDTAFEQSGLSWSEIEAIATTCAPGLVGALLLGAAAGKTLAMIHNKPFIGVHHLEGHIYASYLSQPELEPPFLCLLVSGGHTSFIEVRGCGEYKLLGETRDDAAGEAFDKVARLLRVGYPGGPVIDRLAKTGDPQAFKLPEGRISLPGGGYHPYDCSFSGLKTAVLRLVQQFETQGKAVPVADIAASFQYTVAQALTKRAVRCAGDRQLQTIVVGGGVAANSGLRQILTAAAAEAGIQVYFPPLKFCTDNAAMIACAAAEHFQKGDRSRLDLPVASRLPITQVQTLYTPLVPLKGKS.

Positions 111 and 115 each coordinate Fe cation. Residues 134 to 138 (LVSGG), Asp167, Gly180, Asp184, and Asn279 contribute to the substrate site. Asp307 provides a ligand contact to Fe cation.

This sequence belongs to the KAE1 / TsaD family. Requires Fe(2+) as cofactor.

The protein resides in the cytoplasm. It carries out the reaction L-threonylcarbamoyladenylate + adenosine(37) in tRNA = N(6)-L-threonylcarbamoyladenosine(37) in tRNA + AMP + H(+). In terms of biological role, required for the formation of a threonylcarbamoyl group on adenosine at position 37 (t(6)A37) in tRNAs that read codons beginning with adenine. Is involved in the transfer of the threonylcarbamoyl moiety of threonylcarbamoyl-AMP (TC-AMP) to the N6 group of A37, together with TsaE and TsaB. TsaD likely plays a direct catalytic role in this reaction. This Picosynechococcus sp. (strain ATCC 27264 / PCC 7002 / PR-6) (Agmenellum quadruplicatum) protein is tRNA N6-adenosine threonylcarbamoyltransferase.